The chain runs to 621 residues: Protein Tra (621 aa).

A helical transmembrane segment spans residues 126–146 (GAWPVAGSLALIAANVAALVI). In terms of domain architecture, FtsK spans 275-465 (GEPVQVPLGR…LALSTSGESR (191 aa)). 290–297 (GTSGSGKS) serves as a coordination point for ATP. Residues 564–584 (VAAAIGTGATTVADVATVTGI) form a helical membrane-spanning segment.

Its subcellular location is the cell membrane. Major protein required for plasmid transfer. The chain is Protein Tra (tra) from Streptomyces lividans.